Reading from the N-terminus, the 2768-residue chain is Thyroglobulin (2768 aa).

A signal peptide spans 1-20 (MMTLVLWVSTLLSSVCLVAA). The residue at position 25 (Tyr-25) is an Iodotyrosine; alternate. At Tyr-25 the chain carries Sulfotyrosine; alternate. Tyr-25 carries the thyroxine; alternate modification. Tyr-25 carries the post-translational modification Triiodothyronine; alternate. Thyroglobulin type-1 domains follow at residues 32–93 (LRPC…PTAC), 94–161 (LSFC…PTRC), 162–298 (PRSC…RFRC), and 299–359 (PTKC…PLFC). 8 disulfide bridges follow: Cys-35–Cys-53, Cys-64–Cys-71, Cys-73–Cys-93, Cys-97–Cys-121, Cys-132–Cys-139, Cys-141–Cys-161, Cys-165–Cys-184, and Cys-195–Cys-236. At Tyr-109 the chain carries Iodotyrosine. A glycan (N-linked (GlcNAc...) asparagine) is linked at Asn-111. An Iodotyrosine; alternate modification is found at Tyr-150. Tyr-150 is modified (diiodotyrosine; alternate). A glycan (N-linked (GlcNAc...) asparagine) is linked at Asn-199. Tyr-235 and Tyr-259 each carry iodotyrosine. 8 disulfide bridges follow: Cys-302-Cys-320, Cys-331-Cys-337, Cys-339-Cys-365, Cys-408-Cys-608, Cys-631-Cys-636, Cys-638-Cys-658, Cys-662-Cys-687, and Cys-698-Cys-703. N-linked (GlcNAc...) asparagine glycosylation is found at Asn-484, Asn-496, and Asn-545. 6 consecutive Thyroglobulin type-1 domains span residues 605-658 (AQAC…HPRC), 659-726 (PTKC…PKLC), 727-922 (PSVC…IPAC), 923-1074 (PGPC…MPQC), 1075-1146 (PTSC…SAQC), and 1147-1211 (PGLC…QPAC). Iodotyrosine; alternate is present on Tyr-704. Position 704 is a thyroxine; alternate (Tyr-704). Tyr-704 carries the post-translational modification Triiodothyronine; alternate. Tyr-704 carries the post-translational modification Diiodotyrosine; alternate. Disulfide bonds link Cys-705–Cys-726, Cys-730–Cys-763, Cys-774–Cys-899, Cys-901–Cys-922, Cys-926–Cys-1032, Cys-1043–Cys-1050, Cys-1052–Cys-1074, Cys-1078–Cys-1109, Cys-1127–Cys-1146, Cys-1150–Cys-1170, Cys-1182–Cys-1189, Cys-1191–Cys-1211, Cys-1216–Cys-1265, Cys-1232–Cys-1246, Cys-1306–Cys-1356, and Cys-1331–Cys-1347. The N-linked (GlcNAc...) asparagine glycan is linked to Asn-748. Iodotyrosine is present on Tyr-785. The N-linked (GlcNAc...) asparagine glycan is linked to Asn-817. Tyr-867 is modified (iodotyrosine; alternate). Tyr-867 carries the post-translational modification Diiodotyrosine; alternate. Position 884 is a diiodotyrosine (Tyr-884). N-linked (GlcNAc...) asparagine glycosylation is present at Asn-948. Tyr-993 bears the Iodotyrosine; alternate mark. Tyr-993 carries the post-translational modification Diiodotyrosine; alternate. Asn-1017 carries an N-linked (GlcNAc...) asparagine glycan. A glycan (N-linked (GlcNAc...) asparagine) is linked at Asn-1141. At Tyr-1310 the chain carries Iodotyrosine. Tyr-1310 carries the thyroxine modification. 2 N-linked (GlcNAc...) asparagine glycosylation sites follow: Asn-1349 and Asn-1365. 9 disulfides stabilise this stretch: Cys-1441–Cys-1458, Cys-1461–Cys-1472, Cys-1475–Cys-1489, Cys-1492–Cys-1509, Cys-1513–Cys-1522, Cys-1542–Cys-1564, Cys-1602–Cys-1626, Cys-1606–Cys-1612, and Cys-1638–Cys-1661. 3 Type II repeats span residues 1455–1468 (PLGCVKCPEGSFSQ), 1469–1485 (DGKCTPCPAGTYQGQAG), and 1486–1502 (SSACIPCPRGRTTTITG). Residues 1510–1564 (VTDCQRDEAGLQCDQNGQYQANQKDMDSGEVFCVDSEGQRLQWLQTEAGLSESQC) form the Thyroglobulin type-1 11 domain. The Type IIIA repeat unit spans residues 1602-1722 (CLADCADDEA…GTNLTDTHLF (121 aa)). Asn-1715 carries N-linked (GlcNAc...) asparagine glycosylation. 4 disulfide bridges follow: Cys-1723–Cys-1748, Cys-1727–Cys-1733, Cys-1732–Cys-1834, and Cys-1759–Cys-1776. One copy of the Type IIIB repeat lies at 1723–1891 (CLLACDQDSC…LFSAEQANLW (169 aa)). Asn-1773 and Asn-1866 each carry an N-linked (GlcNAc...) asparagine glycan. Disulfide bonds link Cys-1892–Cys-1918, Cys-1896–Cys-1903, Cys-1927–Cys-1938, Cys-1995–Cys-2023, Cys-1999–Cys-2005, Cys-2004–Cys-2075, and Cys-2034–Cys-2047. One copy of the Type IIIA repeat lies at 1892 to 1994 (CLSRCAQEPV…EKLISNGFFE (103 aa)). Residue Asn-1937 is glycosylated (N-linked (GlcNAc...) asparagine). Residues 1995–2127 (CERLCDRDPC…SATRNFSLAQ (133 aa)) form a Type IIIB repeat. The N-linked (GlcNAc...) asparagine glycan is linked to Asn-2012. The N-linked (GlcNAc...) asparagine glycan is linked to Asn-2122. Residues 2128-2185 (DFCLQECSRHQDCLVTTLQIQQGVVRCVFYPDIQSCEHSLRSKTCWLLLHEEAAYIYR) form a Type IIIA repeat. 3 disulfide bridges follow: Cys-2130/Cys-2154, Cys-2134/Cys-2140, and Cys-2163/Cys-2172. An Iodotyrosine modification is found at Tyr-2184. The interval 2188 to 2768 (GAPLHQSDGI…LEPVPKSYSK (581 aa)) is cholinesterase-like (ChEL). Residue Asn-2251 is glycosylated (N-linked (GlcNAc...) asparagine). Cys-2265 and Cys-2282 are joined by a disulfide. N-linked (GlcNAc...) asparagine glycans are attached at residues Asn-2296 and Asn-2445. An intrachain disulfide couples Cys-2443 to Cys-2454. Tyr-2541 carries the thyroxine modification. Tyr-2574 is subject to Iodotyrosine; alternate. Tyr-2574 carries the post-translational modification Thyroxine; alternate. A Triiodothyronine; alternate modification is found at Tyr-2574. At Tyr-2574 the chain carries Diiodotyrosine; alternate. A glycan (N-linked (GlcNAc...) asparagine) is linked at Asn-2583. Iodotyrosine is present on residues Tyr-2588 and Tyr-2618. The cysteines at positions 2592 and 2716 are disulfide-linked. Residue Tyr-2698 is modified to Diiodotyrosine. The interval 2731–2768 (GAKDAQLTKSGEEDLEVGPGSEEDFSGSLEPVPKSYSK) is disordered. The segment covering 2743–2755 (EDLEVGPGSEEDF) has biased composition (acidic residues). Tyr-2766 is modified (iodotyrosine; alternate). The residue at position 2766 (Tyr-2766) is a Thyroxine; alternate. Tyr-2766 is subject to Triiodothyronine; alternate. Tyr-2766 carries the diiodotyrosine; alternate modification.

Belongs to the type-B carboxylesterase/lipase family. Monomer. Homodimer (via ChEL region); occurs in the endoplasmic reticulum and is required for export to the Golgi apparatus. Homooligomer; disulfide-linked; stored in this form in the thyroid follicle lumen. Post-translationally, iodinated on tyrosine residues by TPO. There are 4 pairs of iodinated tyrosines used for coupling: acceptor Tyr-25 is coupled to donor Tyr-150 or Tyr-235, acceptor Tyr-2574 is coupled to donor Tyr-2541, acceptor Tyr-2766 in monomer 1 is coupled to donor Tyr-2766 in monomer 2 and acceptor Tyr-1310 in monomer 1 is coupled to donor Tyr-109 in monomer 2. Sulfated tyrosines are desulfated during iodination. In terms of processing, undergoes sequential proteolysis by cathepsins to release thyroxine (T4) and triiodothyronine (T3) hormones. In the thyroid follicle lumen, cross-linked TG (storage form) is solubilized by limited proteolysis mediated by cathepsins CTSB and/or CTSL. Partially cleaved TG is further processed by CTSK/cathepsin K and/or CTSL resulting in the release of thyroxine (T4). Following endocytosis, further processing occurs leading to the release of triiodothyronine (T3) and more T4 hormones. As to expression, specifically expressed in the thyroid gland.

Its subcellular location is the secreted. Functionally, acts as a substrate for the production of iodinated thyroid hormones thyroxine (T4) and triiodothyronine (T3). The synthesis of T3 and T4 involves iodination of selected tyrosine residues of TG/thyroglobulin followed by their oxidative coupling. Following TG re-internalization and lysosomal-mediated proteolysis, T3 and T4 are released from the polypeptide backbone leading to their secretion into the bloodstream. One dimer produces 7 thyroid hormone molecules. The protein is Thyroglobulin (Tg) of Rattus norvegicus (Rat).